The chain runs to 1116 residues: MAP kinase kinase kinase mkh1 (1116 aa).

Disordered stretches follow at residues 510 to 601 (LKMP…SNSL) and 618 to 647 (ALDE…ENHH). The segment covering 515-531 (NSGSSAPQSPSSNTSAS) has biased composition (low complexity). A compositionally biased stretch (basic residues) spans 553 to 569 (LRRKNTLTRRPSIRHAR). The span at 588 to 601 (SFDPKASSKSSNSL) shows a compositional bias: low complexity. Residues 634–647 (PKQSSSQVPKENHH) show a composition bias toward polar residues. Residues 825–1094 (WMKGELIGNG…AEELLNHPFM (270 aa)) enclose the Protein kinase domain. ATP is bound by residues 831–839 (IGNGTYGKV) and Lys854. The Proton acceptor role is filled by Asp955.

Belongs to the protein kinase superfamily. STE Ser/Thr protein kinase family. MAP kinase kinase kinase subfamily.

The catalysed reaction is L-seryl-[protein] + ATP = O-phospho-L-seryl-[protein] + ADP + H(+). It catalyses the reaction L-threonyl-[protein] + ATP = O-phospho-L-threonyl-[protein] + ADP + H(+). May regulate cell morphology, cell wall integrity, salt resistance, cell cycle reentry from stationary-phase arrest, and filamentous growth in response to stress. Activates the MAP kinase kinase skh1/pek1 by phosphorylation. The sequence is that of MAP kinase kinase kinase mkh1 (mkh1) from Schizosaccharomyces pombe (strain 972 / ATCC 24843) (Fission yeast).